Here is a 322-residue protein sequence, read N- to C-terminus: Undecaprenyl-phosphate 4-deoxy-4-formamido-L-arabinose transferase (322 aa).

Over 1-235 the chain is Cytoplasmic; sequence MFEIHPVKKV…TCLTTTPLRM (235 aa). The helical transmembrane segment at 236–256 threads the bilayer; sequence LSLLGSIIAIGGFSIAVLLVI. The Periplasmic segment spans residues 257–269; that stretch reads LRLTFGPQWAAEG. Residues 270–290 form a helical membrane-spanning segment; that stretch reads VFMLFAVLFTFIGAQFIGMGL. Over 291–322 the chain is Cytoplasmic; it reads LGEYIGRIYTDVRARPRYFVQQVIRPSSKENE.

It belongs to the glycosyltransferase 2 family.

The protein resides in the cell inner membrane. The catalysed reaction is UDP-4-deoxy-4-formamido-beta-L-arabinose + di-trans,octa-cis-undecaprenyl phosphate = 4-deoxy-4-formamido-alpha-L-arabinopyranosyl di-trans,octa-cis-undecaprenyl phosphate + UDP. Its pathway is glycolipid biosynthesis; 4-amino-4-deoxy-alpha-L-arabinose undecaprenyl phosphate biosynthesis; 4-amino-4-deoxy-alpha-L-arabinose undecaprenyl phosphate from UDP-4-deoxy-4-formamido-beta-L-arabinose and undecaprenyl phosphate: step 1/2. The protein operates within bacterial outer membrane biogenesis; lipopolysaccharide biosynthesis. Catalyzes the transfer of 4-deoxy-4-formamido-L-arabinose from UDP to undecaprenyl phosphate. The modified arabinose is attached to lipid A and is required for resistance to polymyxin and cationic antimicrobial peptides. The chain is Undecaprenyl-phosphate 4-deoxy-4-formamido-L-arabinose transferase from Escherichia coli O157:H7 (strain EC4115 / EHEC).